A 217-amino-acid polypeptide reads, in one-letter code: Cytidylate kinase (217 aa).

Residue 9-17 (GPAASGKSS) participates in ATP binding.

Belongs to the cytidylate kinase family. Type 1 subfamily.

The protein localises to the cytoplasm. It carries out the reaction CMP + ATP = CDP + ADP. The enzyme catalyses dCMP + ATP = dCDP + ADP. The polypeptide is Cytidylate kinase (Bdellovibrio bacteriovorus (strain ATCC 15356 / DSM 50701 / NCIMB 9529 / HD100)).